A 294-amino-acid polypeptide reads, in one-letter code: Mitochondrial glycine transporter (294 aa).

Solcar repeat units lie at residues 5–84 (RRAT…IRQA), 102–186 (LNMY…MKVL), and 208–292 (ASTL…IVKK). 6 helical membrane-spanning segments follow: residues 11-36 (LIGG…TRLQ), 59-85 (GALP…RQAI), 108-133 (MFSG…VRYE), 161-184 (GFGA…DRMK), 212-238 (INGS…KTRM), and 267-285 (GISL…AWGI).

It belongs to the mitochondrial carrier (TC 2.A.29) family. SLC25A38 subfamily.

It is found in the mitochondrion inner membrane. The enzyme catalyses glycine(in) = glycine(out). In terms of biological role, mitochondrial glycine transporter that imports glycine into the mitochondrial matrix. Plays an important role in providing glycine for the first enzymatic step in heme biosynthesis, the condensation of glycine with succinyl-CoA to produce 5-aminolevulinate (ALA) in the mitochondrial matrix. This is Mitochondrial glycine transporter from Kluyveromyces lactis (strain ATCC 8585 / CBS 2359 / DSM 70799 / NBRC 1267 / NRRL Y-1140 / WM37) (Yeast).